Consider the following 136-residue polypeptide: Classical arabinogalactan protein 11 (136 aa).

The signal sequence occupies residues 1–20; sequence MARLFVVVALLALAVGTVFA. Low complexity-rich tracts occupy residues 24–56, 68–81, and 89–107; these read PSAA…ASSP, SAAS…APTV, and PEAD…PAAA. A disordered region spans residues 24-115; sequence PSAAPTASPT…AAESPKSGAT (92 aa). Residue S112 is the site of GPI-anchor amidated serine attachment. The propeptide at 113-136 is removed in mature form; sequence GATTNVKLSIAGTVAAAGFFIFSL.

It belongs to the classical AGP family. O-glycosylated on the hydroxyproline residues.

Its subcellular location is the cell membrane. Functionally, proteoglycan that seems to be implicated in diverse developmental roles such as differentiation, cell-cell recognition, embryogenesis and programmed cell death. This chain is Classical arabinogalactan protein 11 (AGP11), found in Arabidopsis thaliana (Mouse-ear cress).